Consider the following 488-residue polypeptide: Alkaline nuclease (488 aa).

Belongs to the herpesviridae alkaline nuclease family. As to quaternary structure, interacts with major DNA-binding protein; this interaction increases the nuclease processivity of the alkaline exonuclease.

It is found in the host nucleus. The protein localises to the host cytoplasm. In terms of biological role, plays a role in processing non linear or branched viral DNA intermediates in order to promote the production of mature packaged unit-length linear progeny viral DNA molecules. Exhibits endonuclease and exonuclease activities and accepts both double-stranded and single-stranded DNA as substrate. Exonuclease digestion of DNA is in the 5'-&gt; 3' direction and the products are 5'-monophosphate nucleosides. Additionally, forms a recombinase with the major DNA-binding protein, which displays strand exchange activity. This Homo sapiens (Human) protein is Alkaline nuclease (U70).